The chain runs to 327 residues: Transcription factor bHLH48 (327 aa).

A disordered region spans residues 137-179; sequence EPAETDSMVENQNQSYSSGKRKEREKKVKSSTKKNKSSVESDK. Residues 191–241 enclose the bHLH domain; it reads QATDNHSLAERARREKINARMKLLQELVPGCDKIQGTALVLDEIINHVQTL.

Homodimer. In terms of tissue distribution, expressed in leaves, stems, and flowers.

It is found in the nucleus. In Arabidopsis thaliana (Mouse-ear cress), this protein is Transcription factor bHLH48 (BHLH48).